The chain runs to 101 residues: Phosphoribosyl-AMP cyclohydrolase (101 aa).

Residue Asp71 coordinates Mg(2+). Cys72 lines the Zn(2+) pocket. Mg(2+)-binding residues include Asp73 and Asp75. Cys88 and Cys95 together coordinate Zn(2+).

The protein belongs to the PRA-CH family. Homodimer. Requires Mg(2+) as cofactor. Zn(2+) is required as a cofactor.

The protein resides in the cytoplasm. The catalysed reaction is 1-(5-phospho-beta-D-ribosyl)-5'-AMP + H2O = 1-(5-phospho-beta-D-ribosyl)-5-[(5-phospho-beta-D-ribosylamino)methylideneamino]imidazole-4-carboxamide. Its pathway is amino-acid biosynthesis; L-histidine biosynthesis; L-histidine from 5-phospho-alpha-D-ribose 1-diphosphate: step 3/9. In terms of biological role, catalyzes the hydrolysis of the adenine ring of phosphoribosyl-AMP. This chain is Phosphoribosyl-AMP cyclohydrolase, found in Bacillus cereus (strain ZK / E33L).